The chain runs to 131 residues: Transcription antitermination protein NusB (131 aa).

Belongs to the NusB family.

Involved in transcription antitermination. Required for transcription of ribosomal RNA (rRNA) genes. Binds specifically to the boxA antiterminator sequence of the ribosomal RNA (rrn) operons. In Aliarcobacter butzleri (strain RM4018) (Arcobacter butzleri), this protein is Transcription antitermination protein NusB.